Here is a 185-residue protein sequence, read N- to C-terminus: Ribosome-recycling factor (185 aa).

This sequence belongs to the RRF family.

Its subcellular location is the cytoplasm. Responsible for the release of ribosomes from messenger RNA at the termination of protein biosynthesis. May increase the efficiency of translation by recycling ribosomes from one round of translation to another. The protein is Ribosome-recycling factor of Ehrlichia chaffeensis (strain ATCC CRL-10679 / Arkansas).